Consider the following 62-residue polypeptide: MSAWRKAGISYAAYLNVAAQAIRSSLKTELQTASVLNRSQTDAFYTQYKNGTAASEPTPITK.

Residue threonine 52 is modified to Phosphothreonine.

It belongs to the eukaryotic ATPase epsilon family. In terms of assembly, F-type ATPases have 2 components, CF(1) - the catalytic core - and CF(0) - the membrane proton channel. CF(1) has five subunits: alpha(3), beta(3), gamma(1), delta(1), epsilon(1). CF(0) has three main subunits: a, b and c.

The protein resides in the mitochondrion. Its subcellular location is the mitochondrion inner membrane. Mitochondrial membrane ATP synthase (F(1)F(0) ATP synthase or Complex V) produces ATP from ADP in the presence of a proton gradient across the membrane which is generated by electron transport complexes of the respiratory chain. F-type ATPases consist of two structural domains, F(1) - containing the extramembraneous catalytic core, and F(0) - containing the membrane proton channel, linked together by a central stalk and a peripheral stalk. During catalysis, ATP synthesis in the catalytic domain of F(1) is coupled via a rotary mechanism of the central stalk subunits to proton translocation. Part of the complex F(1) domain and of the central stalk which is part of the complex rotary element. Rotation of the central stalk against the surrounding alpha(3)beta(3) subunits leads to hydrolysis of ATP in three separate catalytic sites on the beta subunits. This Saccharomyces cerevisiae (strain ATCC 204508 / S288c) (Baker's yeast) protein is ATP synthase subunit epsilon, mitochondrial (ATP15).